Consider the following 752-residue polypeptide: Neuroendocrine convertase 1 (752 aa).

The N-terminal stretch at 1 to 27 (MKQRGWTLQCTAFTLFCVWCALNSVKA) is a signal peptide. The propeptide occupies 28 to 110 (KRQFVNEWAA…QQYEKERRKR (83 aa)). Residues 129–450 (QWYLQDTRMT…FGLLNAKALV (322 aa)) enclose the Peptidase S8 domain. The active-site Charge relay system is D167. A glycan (N-linked (GlcNAc...) asparagine) is linked at N173. The active-site Charge relay system is the H208. Cystine bridges form between C225/C374 and C317/C347. S382 (charge relay system) is an active-site residue. N401 carries an N-linked (GlcNAc...) asparagine glycan. The region spanning 460-597 (NVPEKKECII…KLILHGTSSQ (138 aa)) is the P/Homo B domain. C467 and C494 are joined by a disulfide. The interval 631–662 (PTQNSLNGNLLVPKNSSSSSVEDRRDEQVQGA) is disordered. N645 carries N-linked (GlcNAc...) asparagine glycosylation.

The protein belongs to the peptidase S8 family. Furin subfamily. Ca(2+) serves as cofactor.

The protein resides in the cytoplasmic vesicle. The protein localises to the secretory vesicle. The enzyme catalyses Release of protein hormones, neuropeptides and renin from their precursors, generally by hydrolysis of -Lys-Arg-|- bonds.. Involved in the processing of hormone and other protein precursors at sites comprised of pairs of basic amino acid residues. Substrates include POMC, renin, enkephalin, dynorphin, somatostatin, insulin and AGRP. This Rattus norvegicus (Rat) protein is Neuroendocrine convertase 1 (Pcsk1).